Consider the following 205-residue polypeptide: MSKKKGLSAEEKRTRMMEIFSETKDVFQLKDLEKIAPKEKGITAMSVKEVLQSLVDDGMVDCERIGTSNYYWAFPSKALHARKHKLEVLESQLSEGSQKHASLQKSIEKAKIGRCETEERTRLAKELSSLRDQREQLKAEVEKYKDCDPQVVEEIRQANKVAKEAANRWTDNIFAIKSWAKRKFGFEENKIDRTFGIPEDFDYID.

Serine 2 carries the post-translational modification N-acetylserine. A coiled-coil region spans residues 84 to 173 (HKLEVLESQL…EAANRWTDNI (90 aa)).

It belongs to the MND1 family. Heterodimer with PSMC3IP/HOP2. MND1-PSMC3IP interacts with DMC1 and RAD51 and binds preferentially to dsDNA.

The protein localises to the nucleus. In terms of biological role, required for proper homologous chromosome pairing and efficient cross-over and intragenic recombination during meiosis. Stimulates both DMC1- and RAD51-mediated homologous strand assimilation, which is required for the resolution of meiotic double-strand breaks. This is Meiotic nuclear division protein 1 homolog from Homo sapiens (Human).